A 203-amino-acid polypeptide reads, in one-letter code: Small ribosomal subunit protein uS4 (203 aa).

One can recognise an S4 RNA-binding domain in the interval Arg93–Val156.

This sequence belongs to the universal ribosomal protein uS4 family. In terms of assembly, part of the 30S ribosomal subunit. Contacts protein S5. The interaction surface between S4 and S5 is involved in control of translational fidelity.

In terms of biological role, one of the primary rRNA binding proteins, it binds directly to 16S rRNA where it nucleates assembly of the body of the 30S subunit. Functionally, with S5 and S12 plays an important role in translational accuracy. The protein is Small ribosomal subunit protein uS4 of Streptococcus pyogenes serotype M49 (strain NZ131).